The following is a 94-amino-acid chain: Exodeoxyribonuclease 7 small subunit (94 aa).

It belongs to the XseB family. As to quaternary structure, heterooligomer composed of large and small subunits.

It is found in the cytoplasm. The catalysed reaction is Exonucleolytic cleavage in either 5'- to 3'- or 3'- to 5'-direction to yield nucleoside 5'-phosphates.. Functionally, bidirectionally degrades single-stranded DNA into large acid-insoluble oligonucleotides, which are then degraded further into small acid-soluble oligonucleotides. The protein is Exodeoxyribonuclease 7 small subunit of Trichormus variabilis (strain ATCC 29413 / PCC 7937) (Anabaena variabilis).